Consider the following 365-residue polypeptide: Phosphate acyltransferase (365 aa).

The protein belongs to the PlsX family. In terms of assembly, homodimer. Probably interacts with PlsY.

It localises to the cytoplasm. It catalyses the reaction a fatty acyl-[ACP] + phosphate = an acyl phosphate + holo-[ACP]. The protein operates within lipid metabolism; phospholipid metabolism. Functionally, catalyzes the reversible formation of acyl-phosphate (acyl-PO(4)) from acyl-[acyl-carrier-protein] (acyl-ACP). This enzyme utilizes acyl-ACP as fatty acyl donor, but not acyl-CoA. The protein is Phosphate acyltransferase of Klebsiella pneumoniae (strain 342).